Consider the following 127-residue polypeptide: Large ribosomal subunit protein bL12 (127 aa).

Residues 96 to 127 (GTPSTLKEAVSKDDAEEAAKQLKEAGAEVEVK) form a disordered region. The span at 104-127 (AVSKDDAEEAAKQLKEAGAEVEVK) shows a compositional bias: basic and acidic residues.

The protein belongs to the bacterial ribosomal protein bL12 family. In terms of assembly, homodimer. Part of the ribosomal stalk of the 50S ribosomal subunit. Forms a multimeric L10(L12)X complex, where L10 forms an elongated spine to which 2 to 4 L12 dimers bind in a sequential fashion. Binds GTP-bound translation factors.

Forms part of the ribosomal stalk which helps the ribosome interact with GTP-bound translation factors. Is thus essential for accurate translation. The polypeptide is Large ribosomal subunit protein bL12 (Oleidesulfovibrio alaskensis (strain ATCC BAA-1058 / DSM 17464 / G20) (Desulfovibrio alaskensis)).